Reading from the N-terminus, the 527-residue chain is ATP synthase subunit alpha (527 aa).

An ATP-binding site is contributed by 169–176; sequence GDRQTGKT.

It belongs to the ATPase alpha/beta chains family. F-type ATPases have 2 components, CF(1) - the catalytic core - and CF(0) - the membrane proton channel. CF(1) has five subunits: alpha(3), beta(3), gamma(1), delta(1), epsilon(1). CF(0) has three main subunits: a(1), b(2) and c(9-12). The alpha and beta chains form an alternating ring which encloses part of the gamma chain. CF(1) is attached to CF(0) by a central stalk formed by the gamma and epsilon chains, while a peripheral stalk is formed by the delta and b chains.

Its subcellular location is the cell membrane. The enzyme catalyses ATP + H2O + 4 H(+)(in) = ADP + phosphate + 5 H(+)(out). Produces ATP from ADP in the presence of a proton gradient across the membrane. The alpha chain is a regulatory subunit. The chain is ATP synthase subunit alpha from Metamycoplasma arthritidis (strain 158L3-1) (Mycoplasma arthritidis).